The chain runs to 142 residues: Large ribosomal subunit protein uL13 (142 aa).

It belongs to the universal ribosomal protein uL13 family. In terms of assembly, part of the 50S ribosomal subunit.

Functionally, this protein is one of the early assembly proteins of the 50S ribosomal subunit, although it is not seen to bind rRNA by itself. It is important during the early stages of 50S assembly. This chain is Large ribosomal subunit protein uL13, found in Aeromonas hydrophila subsp. hydrophila (strain ATCC 7966 / DSM 30187 / BCRC 13018 / CCUG 14551 / JCM 1027 / KCTC 2358 / NCIMB 9240 / NCTC 8049).